A 224-amino-acid chain; its full sequence is Orotate phosphoribosyltransferase (224 aa).

Lys29 is a binding site for 5-phospho-alpha-D-ribose 1-diphosphate. An orotate-binding site is contributed by Phe37–Phe38. 5-phospho-alpha-D-ribose 1-diphosphate-binding positions include Tyr75 to Lys76, Arg105, Lys106, Lys109, His111, and Asp130 to Ser138. Thr134 and Arg162 together coordinate orotate.

The protein belongs to the purine/pyrimidine phosphoribosyltransferase family. PyrE subfamily. In terms of assembly, homodimer. The cofactor is Mg(2+).

The enzyme catalyses orotidine 5'-phosphate + diphosphate = orotate + 5-phospho-alpha-D-ribose 1-diphosphate. It functions in the pathway pyrimidine metabolism; UMP biosynthesis via de novo pathway; UMP from orotate: step 1/2. Its function is as follows. Catalyzes the transfer of a ribosyl phosphate group from 5-phosphoribose 1-diphosphate to orotate, leading to the formation of orotidine monophosphate (OMP). In Bordetella pertussis (strain Tohama I / ATCC BAA-589 / NCTC 13251), this protein is Orotate phosphoribosyltransferase.